Here is a 355-residue protein sequence, read N- to C-terminus: Methionine import ATP-binding protein MetN (355 aa).

The 243-residue stretch at 8–250 (LKNIDITFTQ…PQEDLTQEFI (243 aa)) folds into the ABC transporter domain. 42 to 49 (GYSGAGKS) contributes to the ATP binding site.

Belongs to the ABC transporter superfamily. Methionine importer (TC 3.A.1.24) family. The complex is composed of two ATP-binding proteins (MetN), two transmembrane proteins (MetI) and a solute-binding protein (MetQ).

It localises to the cell membrane. It carries out the reaction L-methionine(out) + ATP + H2O = L-methionine(in) + ADP + phosphate + H(+). The catalysed reaction is D-methionine(out) + ATP + H2O = D-methionine(in) + ADP + phosphate + H(+). Its function is as follows. Part of the ABC transporter complex MetNIQ involved in methionine import. Responsible for energy coupling to the transport system. The chain is Methionine import ATP-binding protein MetN from Streptococcus thermophilus (strain ATCC BAA-250 / LMG 18311).